The sequence spans 679 residues: Probable metal-nicotianamine transporter YSL18 (679 aa).

Residues 1 to 17 (MESVGDPRDGPSTERAF) are compositionally biased toward basic and acidic residues. Residues 1–21 (MESVGDPRDGPSTERAFEGQP) are disordered. Helical transmembrane passes span 29 to 49 (VTLR…SVMM), 51 to 71 (LVFT…LGFF), 101 to 121 (CVVA…LLAM), 144 to 164 (FGRM…AIVP), 211 to 231 (LASL…NCGF), 255 to 275 (VGIG…GSII), 309 to 329 (VFCA…AISL), 379 to 399 (FAIS…PLMY), 407 to 427 (VAAA…GTGV), 441 to 461 (ILMF…SLVI), 497 to 517 (VIGT…FHHF), 547 to 567 (LPKY…AVCA), 593 to 613 (FLLV…VFLW), and 627 to 647 (VLAS…ALLA).

The protein belongs to the YSL (TC 2.A.67.2) family.

Its subcellular location is the membrane. Functionally, may be involved in the transport of nicotianamine-chelated metals. This chain is Probable metal-nicotianamine transporter YSL18 (YSL18), found in Oryza sativa subsp. japonica (Rice).